A 281-amino-acid chain; its full sequence is Large ribosomal subunit protein uL22 (281 aa).

The segment at Met-1–Val-225 is large ribosomal subunit protein uL22. Disordered regions lie at residues Arg-137 to Ala-175 and Ala-199 to Arg-281. A compositionally biased stretch (basic residues) spans Thr-139–Leu-153. Low complexity-rich tracts occupy residues Pro-159 to Ala-175 and Ala-199 to Ala-239. The tract at residues Ala-226–Arg-281 is unknown. A compositionally biased stretch (basic and acidic residues) spans Arg-261–Asp-271. Residues Ala-272 to Arg-281 show a composition bias toward acidic residues.

It belongs to the universal ribosomal protein uL22 family. In terms of assembly, part of the 50S ribosomal subunit.

The globular domain of the protein is located near the polypeptide exit tunnel on the outside of the subunit, while an extended beta-hairpin is found that lines the wall of the exit tunnel in the center of the 70S ribosome. Functionally, this protein binds specifically to 23S rRNA; its binding is stimulated by other ribosomal proteins, e.g. L4, L17, and L20. It is important during the early stages of 50S assembly. It makes multiple contacts with different domains of the 23S rRNA in the assembled 50S subunit and ribosome. This is Large ribosomal subunit protein uL22 from Acidothermus cellulolyticus (strain ATCC 43068 / DSM 8971 / 11B).